The following is a 35-amino-acid chain: Mu-theraphotoxin-Ca2a (35 aa).

Cystine bridges form between Cys-2–Cys-17, Cys-9–Cys-24, and Cys-16–Cys-31.

This sequence belongs to the neurotoxin 10 (Hwtx-1) family. 10 (haplotoxin-1) subfamily. As to expression, expressed by the venom gland.

The protein resides in the secreted. Its function is as follows. Potently inhibits Nav1.7/SCN9A (IC(50)=98.1 nM), and moderately inhibits Nav1.2/SCN2A (IC(50)=216.3 nM), Nav1.6/SCN8A (IC(50)=313.6 nM), and Nav1.3/SCN3A (IC(50)=491.3 nM). Hyperpolarizes the slow inactivation, but does not alter the voltage-dependent activation or fast inactivation of Nav1.7/SCN9A. Binds with Nav1.7/SCN9A at the extracellular S3-S4 linker of domain II (site 4). In vivo, exhibits dose-dependent analgesic efficacy by reducing pain responses in rodent models of formalin-induced paw licking, hot plate test, and acetic acid-induced writhing. The sequence is that of Mu-theraphotoxin-Ca2a from Cyriopagopus albostriatus (Cambodian tiger tarantula).